Here is a 629-residue protein sequence, read N- to C-terminus: tRNA uridine 5-carboxymethylaminomethyl modification enzyme MnmG (629 aa).

FAD contacts are provided by residues 13–18, Val-125, and Ser-180; that span reads GGGHAG. NAD(+) is bound at residue 273-287; it reads GPRYCPSIEDKVMRF. Gln-370 is an FAD binding site.

It belongs to the MnmG family. Homodimer. Heterotetramer of two MnmE and two MnmG subunits. FAD is required as a cofactor.

It is found in the cytoplasm. Functionally, NAD-binding protein involved in the addition of a carboxymethylaminomethyl (cmnm) group at the wobble position (U34) of certain tRNAs, forming tRNA-cmnm(5)s(2)U34. The protein is tRNA uridine 5-carboxymethylaminomethyl modification enzyme MnmG of Escherichia coli O45:K1 (strain S88 / ExPEC).